The primary structure comprises 560 residues: Membrane protein insertase YidC (560 aa).

6 consecutive transmembrane segments (helical) span residues Ile5–Phe25, Ala334–Phe354, Tyr357–Phe377, Leu431–Ile451, Leu476–Leu496, and Phe522–Trp542.

It belongs to the OXA1/ALB3/YidC family. Type 1 subfamily. As to quaternary structure, interacts with the Sec translocase complex via SecD. Specifically interacts with transmembrane segments of nascent integral membrane proteins during membrane integration.

The protein resides in the cell inner membrane. Functionally, required for the insertion and/or proper folding and/or complex formation of integral membrane proteins into the membrane. Involved in integration of membrane proteins that insert both dependently and independently of the Sec translocase complex, as well as at least some lipoproteins. Aids folding of multispanning membrane proteins. This Rickettsia felis (strain ATCC VR-1525 / URRWXCal2) (Rickettsia azadi) protein is Membrane protein insertase YidC.